The primary structure comprises 210 residues: Scoloptoxin SSD558 (210 aa).

An N-terminal signal peptide occupies residues 1–23; it reads MNILLPSTLFVLLMFQIIGSGMG.

Contains 3 disulfide bonds. As to expression, expressed by the venom gland.

It localises to the secreted. The chain is Scoloptoxin SSD558 from Scolopendra dehaani (Thai centipede).